Consider the following 147-residue polypeptide: Protein phosphatase 1 regulatory subunit 14B (147 aa).

Low complexity predominate over residues 1–15 (MADSGPAGGAALAAP). Residues 1-55 (MADSGPAGGAALAAPAPGPGSGSTGPRVYFQSPPGAAGEGPGGADDDGPVRRQGK) form a disordered region. A2 is subject to N-acetylalanine. Phosphoserine is present on S21. Y29 carries the post-translational modification Phosphotyrosine. Position 32 is a phosphoserine (S32). T57 is subject to Phosphothreonine. Positions 61-103 (DRKELRKRLNLEEWILEQLTRLYDCQEEEIPELEIDVDELLDM) form a coiled coil.

The protein belongs to the PP1 inhibitor family. In terms of processing, phosphorylated primarily on Thr-57 by PKC (in vitro). An unknown Ser is also phosphorylated by PKC (in vitro). In terms of tissue distribution, ubiquitous. Highly expressed in testis. Detected at low levels in the other tissues tested. Highly expressed in cardiac muscle, bladder and aorta (at protein level).

It is found in the cytoplasm. In terms of biological role, inhibitor of PPP1CA. Has over 50-fold higher inhibitory activity when phosphorylated. In Mus musculus (Mouse), this protein is Protein phosphatase 1 regulatory subunit 14B (Ppp1r14b).